Reading from the N-terminus, the 423-residue chain is Glucose-1-phosphate adenylyltransferase (423 aa).

Residues Tyr-110, Gly-175, 190-191, and Ser-208 contribute to the alpha-D-glucose 1-phosphate site; that span reads EK.

It belongs to the bacterial/plant glucose-1-phosphate adenylyltransferase family. In terms of assembly, homotetramer.

It catalyses the reaction alpha-D-glucose 1-phosphate + ATP + H(+) = ADP-alpha-D-glucose + diphosphate. It participates in glycan biosynthesis; glycogen biosynthesis. Functionally, involved in the biosynthesis of ADP-glucose, a building block required for the elongation reactions to produce glycogen. Catalyzes the reaction between ATP and alpha-D-glucose 1-phosphate (G1P) to produce pyrophosphate and ADP-Glc. The polypeptide is Glucose-1-phosphate adenylyltransferase (Nitrosococcus oceani (strain ATCC 19707 / BCRC 17464 / JCM 30415 / NCIMB 11848 / C-107)).